The chain runs to 404 residues: Glycosylated lysosomal membrane protein (404 aa).

The N-terminal stretch at methionine 1–glycine 35 is a signal peptide. The Lumenal segment spans residues glutamate 36–glycine 370. N-linked (GlcNAc...) asparagine glycans are attached at residues asparagine 64, asparagine 85, asparagine 94, asparagine 133, asparagine 157, asparagine 166, asparagine 185, asparagine 228, and asparagine 331. Residues isoleucine 371–leucine 391 form a helical membrane-spanning segment. Over leucine 392–asparagine 404 the chain is Cytoplasmic. The Lysosomal targeting motif motif lies at tyrosine 400 to asparagine 404.

This sequence belongs to the GLMP family. Interacts (via lumenal domain) with lysosomal protein MFSD1; the interaction starts while both proteins are still in the endoplasmic reticulum and is required for stabilization of MFSD1 in lysosomes but has no direct effect on its targeting to lysosomes or transporter activity. Highly N-glycosylated. N-glycosylation is essential for GLMP stability and for MFSD1 lysosomal localization. As to expression, detected in brain, heart, liver, kidney, lung, intestine, testis and spleen. Expressed at highest levels in kidney cortex. However, another study reports highest expression levels in lung. Expressed in myoblasts with expression increasing during differentiation into myotubes.

It is found in the lysosome membrane. Its function is as follows. Required to protect lysosomal transporter MFSD1 from lysosomal proteolysis and for MFSD1 lysosomal localization. This is Glycosylated lysosomal membrane protein from Mus musculus (Mouse).